The sequence spans 700 residues: Pentatricopeptide repeat-containing protein At3g26540 (700 aa).

PPR repeat units lie at residues 95–125 (PIFL…MPER), 126–160 (DGGS…GVRA), 161–195 (TETS…GYSG), 196–226 (NVDL…IVNP), 227–261 (SDVS…NVRP), 262–296 (LNHT…SVVA), 297–327 (DTVV…TRSK), 328–362 (DLKS…NIVS), 363–389 (WNAM…MRQE), 394–428 (DNVT…GYDT), 429–459 (NVIV…MSEL), 461–495 (DEVS…AKPS), 497–529 (YTLA…GYKI), 530–560 (DVVI…AATR), 561–595 (DLIL…GVKP), 596–626 (DHVT…MSTK), and 632–662 (QVEH…MPFD).

It belongs to the PPR family. PCMP-A subfamily.

This Arabidopsis thaliana (Mouse-ear cress) protein is Pentatricopeptide repeat-containing protein At3g26540 (PCMP-A5).